A 944-amino-acid chain; its full sequence is DNA ligase 4 (944 aa).

ATP-binding residues include Glu-280, Lys-282, Arg-287, Glu-340, Phe-382, Glu-442, Lys-447, Lys-464, and Lys-466. Lys-282 (N6-AMP-lysine intermediate) is an active-site residue. Glu-340 contributes to the Mg(2+) binding site. A Mg(2+)-binding site is contributed by Glu-442. 2 consecutive BRCT domains span residues 681 to 780 (PISN…PNYC) and 836 to 941 (FPLF…DFPV).

This sequence belongs to the ATP-dependent DNA ligase family. Component of the DNA ligase IV complex, composed of DNL4, LIF1 and NEJ1. Interacts (via BRCT domain) with LIF1. Interacts with NEJ1. Interacts with POL4 in the DNL4-LIF1 complex. The cofactor is Mg(2+).

It is found in the nucleus. The catalysed reaction is ATP + (deoxyribonucleotide)n-3'-hydroxyl + 5'-phospho-(deoxyribonucleotide)m = (deoxyribonucleotide)n+m + AMP + diphosphate.. DNA ligase involved in DNA non-homologous end joining (NHEJ); required for double-strand break (DSB) repair. In Saccharomyces cerevisiae (strain ATCC 204508 / S288c) (Baker's yeast), this protein is DNA ligase 4 (DNL4).